We begin with the raw amino-acid sequence, 725 residues long: Ribosomal RNA large subunit methyltransferase K/L (725 aa).

The region spanning 46-157 (VGYRLCLWSR…KGQAVLSLDL (112 aa)) is the THUMP domain.

It belongs to the methyltransferase superfamily. RlmKL family.

It is found in the cytoplasm. The enzyme catalyses guanosine(2445) in 23S rRNA + S-adenosyl-L-methionine = N(2)-methylguanosine(2445) in 23S rRNA + S-adenosyl-L-homocysteine + H(+). It catalyses the reaction guanosine(2069) in 23S rRNA + S-adenosyl-L-methionine = N(2)-methylguanosine(2069) in 23S rRNA + S-adenosyl-L-homocysteine + H(+). Its function is as follows. Specifically methylates the guanine in position 2445 (m2G2445) and the guanine in position 2069 (m7G2069) of 23S rRNA. The polypeptide is Ribosomal RNA large subunit methyltransferase K/L (Stutzerimonas stutzeri (strain A1501) (Pseudomonas stutzeri)).